We begin with the raw amino-acid sequence, 819 residues long: Protein EFR3 homolog A (819 aa).

A phosphoserine mark is found at S360, S363, S420, and S692.

The protein belongs to the EFR3 family. Component of a phosphatidylinositol 4-kinase (PI4K) complex, composed of PI4KA, EFR3 (EFR3A or EFR3B), TTC7 (TTC7A or TTC7B) and HYCC (HYCC1 or HYCC2). In terms of processing, palmitoylated at its N-terminus, anchoring the protein to the plasma membrane. As to expression, widely expressed. Expressed in neurons of the superior olivary complex of the auditory brainstem. Also expressed at lower levels in the cochlear nucleus, the lateral leminiscal nuclei and the inferior collicus.

The protein localises to the cell membrane. The protein resides in the cytoplasm. It is found in the cytosol. Its function is as follows. Component of a complex required to localize phosphatidylinositol 4-kinase (PI4K) to the plasma membrane. The complex acts as a regulator of phosphatidylinositol 4-phosphate (PtdIns(4)P) synthesis. In the complex, EFR3A probably acts as the membrane-anchoring component. Also involved in responsiveness to G-protein-coupled receptors; it is however unclear whether this role is direct or indirect. This Mus musculus (Mouse) protein is Protein EFR3 homolog A.